The sequence spans 198 residues: Peptidyl-tRNA hydrolase (198 aa).

Tyr17 is a tRNA binding site. The active-site Proton acceptor is His22. Tyr74, Asn76, and Asn122 together coordinate tRNA.

The protein belongs to the PTH family. In terms of assembly, monomer.

It localises to the cytoplasm. The catalysed reaction is an N-acyl-L-alpha-aminoacyl-tRNA + H2O = an N-acyl-L-amino acid + a tRNA + H(+). In terms of biological role, hydrolyzes ribosome-free peptidyl-tRNAs (with 1 or more amino acids incorporated), which drop off the ribosome during protein synthesis, or as a result of ribosome stalling. Functionally, catalyzes the release of premature peptidyl moieties from peptidyl-tRNA molecules trapped in stalled 50S ribosomal subunits, and thus maintains levels of free tRNAs and 50S ribosomes. This is Peptidyl-tRNA hydrolase from Kineococcus radiotolerans (strain ATCC BAA-149 / DSM 14245 / SRS30216).